Consider the following 142-residue polypeptide: COA8 family protein Y39B6A.34, mitochondrial (142 aa).

Belongs to the COA8 family.

It localises to the mitochondrion inner membrane. Functionally, may be required for cytochrome c complex (COX) assembly and function, COX being the terminal component of the mitochondrial respiratory chain. The protein is COA8 family protein Y39B6A.34, mitochondrial of Caenorhabditis elegans.